Here is a 195-residue protein sequence, read N- to C-terminus: Holliday junction branch migration complex subunit RuvA (195 aa).

The segment at 1 to 66 is domain I; the sequence is MNYLIFKVIY…LIIKDLYGFR (66 aa). A domain II region spans residues 67–141; the sequence is TYNERLLFID…KYINKVNDKN (75 aa). Residue Asn141 is a region of interest, flexible linker. A domain III region spans residues 141 to 195; the sequence is NNWAKELSIGLENLGYTKKDIEYAITKVKINSQQDIDISEIISSAIKEISLRHEN.

This sequence belongs to the RuvA family. Homotetramer. Forms an RuvA(8)-RuvB(12)-Holliday junction (HJ) complex. HJ DNA is sandwiched between 2 RuvA tetramers; dsDNA enters through RuvA and exits via RuvB. An RuvB hexamer assembles on each DNA strand where it exits the tetramer. Each RuvB hexamer is contacted by two RuvA subunits (via domain III) on 2 adjacent RuvB subunits; this complex drives branch migration. In the full resolvosome a probable DNA-RuvA(4)-RuvB(12)-RuvC(2) complex forms which resolves the HJ.

It localises to the cytoplasm. The RuvA-RuvB-RuvC complex processes Holliday junction (HJ) DNA during genetic recombination and DNA repair, while the RuvA-RuvB complex plays an important role in the rescue of blocked DNA replication forks via replication fork reversal (RFR). RuvA specifically binds to HJ cruciform DNA, conferring on it an open structure. The RuvB hexamer acts as an ATP-dependent pump, pulling dsDNA into and through the RuvAB complex. HJ branch migration allows RuvC to scan DNA until it finds its consensus sequence, where it cleaves and resolves the cruciform DNA. The protein is Holliday junction branch migration complex subunit RuvA of Ureaplasma parvum serovar 3 (strain ATCC 27815 / 27 / NCTC 11736).